Reading from the N-terminus, the 359-residue chain is Tyrosine-protein phosphatase non-receptor type 7 (359 aa).

Residues 1–33 (MVQACEGRSRAQLPTLSLGADMTQPPPTKAPAK) are disordered. The interaction with MAP kinases stretch occupies residues 38-51 (LQERRGSSVALMLD). Ser44 is subject to Phosphoserine. Thr66 carries the phosphothreonine modification. 2 positions are modified to phosphoserine: Ser93 and Ser143. Positions 97-349 (LEEEFLKIPS…QFLHHTLALY (253 aa)) constitute a Tyrosine-protein phosphatase domain. Residues Asp257, 290-296 (CSAGIGR), and Gln334 each bind substrate. The active-site Phosphocysteine intermediate is the Cys290. Cys290 carries the cysteine sulfenic acid (-SOH) modification.

It belongs to the protein-tyrosine phosphatase family. Non-receptor class subfamily. Oxidized at active site cysteine. Treatment with pervanadate (vanadate and H(2)O(2)) or with antigen enhanced oxidation of active site cysteine. Expressed in bone marrow-derived mast cells.

It is found in the cytoplasm. The protein localises to the cytoskeleton. The catalysed reaction is O-phospho-L-tyrosyl-[protein] + H2O = L-tyrosyl-[protein] + phosphate. Its activity is regulated as follows. Inhibited upon FCER1A triggering. May play a role in the regulation of T and B-lymphocyte development and signal transduction. The chain is Tyrosine-protein phosphatase non-receptor type 7 (Ptpn7) from Mus musculus (Mouse).